The following is a 307-amino-acid chain: 4-hydroxybenzoate geranyltransferase 1 (307 aa).

8 helical membrane-spanning segments follow: residues 38-58, 62-82, 120-140, 154-174, 179-199, 230-250, 252-272, and 286-306; these read PIGSWLLAWPAFWSVALAADL, PKMLAIFGWWAVWIRGAGCTI, LFIGLGVLYQFNVLTLALAIV, ITYWPQAFLGVMISWGALLGS, GSVVPSIAYPLYISSFFWTLV, MWISWFGVGCIAALVIGGLIL, IGLPYYVFVAIATGQLVWQIF, and FVSNQWFGAIIFTGILLGRLF.

The protein belongs to the UbiA prenyltransferase family. Mg(2+) serves as cofactor. In terms of tissue distribution, expressed only in roots.

It is found in the endoplasmic reticulum membrane. The enzyme catalyses 4-hydroxybenzoate + (2E)-geranyl diphosphate = 3-geranyl-4-hydroxybenzoate + diphosphate. In terms of biological role, prenyltransferase involved in the biosynthesis of shikonin, a naphthoquinone secondary metabolite. Could accept only geranyl diphosphate and not dimethylallyl diphosphate, farnesyl diphosphate, or geranylgeranyl diphosphate as substrate. The sequence is that of 4-hydroxybenzoate geranyltransferase 1 (PGT-1) from Lithospermum erythrorhizon (Purple gromwell).